The chain runs to 259 residues: Leucine-rich repeat-containing protein 3B (259 aa).

The first 33 residues, 1-33, serve as a signal peptide directing secretion; sequence MNLVDLWLTRSLSMCLLLQSFVLMILCFHSASM. The LRRNT domain maps to 34-64; the sequence is CPKGCLCSSSGGLNVTCSNANLKEIPRDLPP. N-linked (GlcNAc...) asparagine glycosylation occurs at N47. 3 LRR repeats span residues 65 to 86, 89 to 110, and 114 to 135; these read ETVL…IFKD, QLRV…AFKG, and TLQT…AFNN. The N-linked (GlcNAc...) asparagine glycan is linked to N94. The LRRCT domain occupies 145–197; sequence NPWHCDCTLQQVLRSMVSNHETAHNVICKTSVLDEHAGRPFLNAANDADLCNL. A helical membrane pass occupies residues 205-225; that stretch reads AMLVTMFGWFTMVISYVVYYV.

It belongs to the LRRC3 family.

Its subcellular location is the membrane. The protein is Leucine-rich repeat-containing protein 3B (LRRC3B) of Bos taurus (Bovine).